The chain runs to 131 residues: Ribosome-binding factor A (131 aa).

This sequence belongs to the RbfA family. Monomer. Binds 30S ribosomal subunits, but not 50S ribosomal subunits or 70S ribosomes.

It localises to the cytoplasm. One of several proteins that assist in the late maturation steps of the functional core of the 30S ribosomal subunit. Associates with free 30S ribosomal subunits (but not with 30S subunits that are part of 70S ribosomes or polysomes). Required for efficient processing of 16S rRNA. May interact with the 5'-terminal helix region of 16S rRNA. This chain is Ribosome-binding factor A, found in Gloeothece citriformis (strain PCC 7424) (Cyanothece sp. (strain PCC 7424)).